The primary structure comprises 179 residues: uncharacterized protein (179 aa).

Helical transmembrane passes span 29–49, 76–96, and 97–117; these read LLGI…GPLI, AKHM…DAYS, and GAII…LLWA.

This sequence belongs to the DP1 family.

It is found in the membrane. This is an uncharacterized protein from Encephalitozoon cuniculi (strain GB-M1) (Microsporidian parasite).